Consider the following 189-residue polypeptide: Low affinity inorganic phosphate transporter 2 (189 aa).

The Cytoplasmic segment spans residues 1–55 (TARYTALVAKDAKRAAADMGKVLHVEIDPEDAKVERMAKDESNQFGLFSWEFVRR). The chain crosses the membrane as a helical span at residues 56 to 76 (HGLHLFGTCSTWFLLDIAFYS). At 77-111 (QNLFQKDVFTAIGWIPPAKTMNAVQEVYKIARAQT) the chain is on the extracellular side. Residues 112 to 132 (LIALCSTVPGYWFTVAFIDII) traverse the membrane as a helical segment. Residues 133 to 134 (GR) lie on the Cytoplasmic side of the membrane. A helical membrane pass occupies residues 135-155 (FAIQLMGFFFMTVFMFAIAIP). The Extracellular portion of the chain corresponds to 156–165 (YHHWTLQENR). The chain crosses the membrane as a helical span at residues 166 to 186 (IGFVIMYSLTFFFANFGPNAT). The Cytoplasmic segment spans residues 187 to 189 (TFV).

Belongs to the major facilitator superfamily. Phosphate:H(+) symporter (TC 2.A.1.9) family.

Its subcellular location is the cell membrane. It catalyses the reaction phosphate(in) + H(+)(in) = phosphate(out) + H(+)(out). Functionally, low-affinity transporter for external inorganic phosphate (Pi). The sequence is that of Low affinity inorganic phosphate transporter 2 from Petunia hybrida (Petunia).